The primary structure comprises 1173 residues: Paired amphipathic helix protein Sin3-like 6 (1173 aa).

The disordered stretch occupies residues 40-75 (NQSAGESGRRLKMKRAREDVHTDTQKRKPEVSSRGE). Residues 55 to 75 (AREDVHTDTQKRKPEVSSRGE) show a composition bias toward basic and acidic residues. 2 consecutive PAH domains span residues 79–148 (LPRT…LPKG) and 162–232 (IRVD…LPNC). 3 disordered regions span residues 236–337 (APST…TTKY), 655–697 (TASG…TAQP), and 740–813 (KHEL…ENNK). Composition is skewed to basic and acidic residues over residues 264-276 (CKLE…SDQR) and 301-319 (RDYE…RTEK). Positions 320–337 (SAASGSQDIGNHKSTTKY) are enriched in polar residues. Residues 750–765 (PTASREQSNFEVNGQN) show a composition bias toward polar residues. Positions 778 to 810 (RSNKDKQSCDKKGAKNKTRAEDDKQENCHKLSE) are enriched in basic and acidic residues.

Its subcellular location is the nucleus. Acts as a transcriptional repressor. Plays roles in regulating gene expression and genome stability. The chain is Paired amphipathic helix protein Sin3-like 6 (SNL6) from Arabidopsis thaliana (Mouse-ear cress).